A 437-amino-acid polypeptide reads, in one-letter code: UDP-N-acetylmuramate--L-alanine ligase (437 aa).

Residue 108–114 participates in ATP binding; that stretch reads GAHGKTS.

Belongs to the MurCDEF family.

Its subcellular location is the cytoplasm. The enzyme catalyses UDP-N-acetyl-alpha-D-muramate + L-alanine + ATP = UDP-N-acetyl-alpha-D-muramoyl-L-alanine + ADP + phosphate + H(+). The protein operates within cell wall biogenesis; peptidoglycan biosynthesis. Functionally, cell wall formation. In Staphylococcus aureus (strain COL), this protein is UDP-N-acetylmuramate--L-alanine ligase.